A 1290-amino-acid chain; its full sequence is 1-phosphatidylinositol 4,5-bisphosphate phosphodiesterase gamma-1 (1290 aa).

Alanine 2 is subject to N-acetylalanine. One can recognise a PH 1 domain in the interval 27-142 (RSLEVGTVMT…WIKGLTWLME (116 aa)). An EF-hand domain is found at 152–187 (QIERWLRKQFYSVDRNREDRISAKDLKNMLSQVNYR). The Ca(2+) site is built by aspartate 165, asparagine 167, glutamate 169, arginine 171, and aspartate 176. A PI-PLC X-box domain is found at 320–464 (ETMNNPLSHY…LKRKILIKHK (145 aa)). Residues histidine 335 and histidine 380 contribute to the active site. In terms of domain architecture, PH 2; first part spans 489 to 523 (SIKNGILYLEDPVNHEWYPHYFVLTSSKIYYSEET). The residue at position 506 (tyrosine 506) is a Phosphotyrosine. Residues 522 to 546 (ETSSDQGNEDEEEPKEASGSTELHS) form a disordered region. SH2 domains follow at residues 550 to 657 (WFHG…SEPV) and 668 to 756 (WYHA…RYPI). Tyrosine 771 is modified (phosphotyrosine; by SYK). Tyrosine 775 is modified (phosphotyrosine). Residue tyrosine 783 is modified to Phosphotyrosine; by ITK, SYK and TXK. Residues 791-851 (TFKCAVKALF…PSNYVEEMIN (61 aa)) form the SH3 domain. Positions 895–931 (FVFSISMPSVAQWSLDVAADSQEELQDWVKKIREVAQ) constitute a PH 2; second part domain. A PI-PLC Y-box domain is found at 953–1070 (LSELVVYCRP…GYVLQPSTMR (118 aa)). Phosphotyrosine is present on tyrosine 977. Residues 1071–1194 (DEAFDPFDKS…TGYRAVPLKN (124 aa)) form the C2 domain. 4 positions are modified to phosphoserine: serine 1221, serine 1227, serine 1233, and serine 1248. The residue at position 1253 (tyrosine 1253) is a Phosphotyrosine. At serine 1263 the chain carries Phosphoserine. Residues 1271–1290 (FDSRERRAPRRTRVNGDNRL) are disordered.

Interacts with AGAP2 via its SH3 domain. Interacts (via SH2 domain) with RET. Interacts with FLT1 (tyrosine-phosphorylated). Interacts (via SH2 domain) with FGFR1, FGFR2, FGFR3 and FGFR4 (phosphorylated). Interacts with LAT (phosphorylated) upon TCR activation. Interacts (via SH3 domain) with the Pro-rich domain of TNK1. Associates with BLNK, VAV1, GRB2 and NCK1 in a B-cell antigen receptor-dependent fashion. Interacts with CBLB in activated T-cells; which inhibits phosphorylation. Interacts with SHB. Interacts (via SH3 domain) with the Arg/Gly-rich-flanked Pro-rich domains of KHDRBS1/SAM68. This interaction is selectively regulated by arginine methylation of KHDRBS1/SAM68. Interacts with INPP5D/SHIP1, THEMIS and CLNK. Interacts with AXL, FLT4 and KIT. Interacts with RALGPS1. Interacts (via the SH2 domains) with VIL1 (phosphorylated at C-terminus tyrosine phosphorylation sites). Interacts (via SH2 domain) with PDGFRA and PDGFRB (tyrosine phosphorylated). Interacts with PIP5K1C. Interacts with NTRK1 and NTRK2 (phosphorylated upon ligand-binding). Interacts with SYK; activates PLCG1. Interacts with GRB2, LAT and THEMIS upon TCR activation in thymocytes. Interacts with TESPA1; the association is increased with prolonged stimulation of the TCR and may facilitate the assembly of the LAT signalosome. Interacts (via C-terminal proline-rich domain (PRD)) with PLCG1 (via SH3 domain); this interaction leads to guanine nucleotide exchange from PlCG1 to DNM1 and enhances DNM1-dependent endocytosis. Ca(2+) serves as cofactor. Post-translationally, ubiquitinated by CBLB in activated T-cells. In terms of processing, tyrosine phosphorylated in response to signaling via activated FLT3, KIT and PDGFRA. Tyrosine phosphorylated by activated FGFR1, FGFR2, FGFR3 and FGFR4. Tyrosine phosphorylated by activated FLT1 and KDR. Tyrosine phosphorylated by activated PDGFRB. The receptor-mediated activation of PLCG1 involves its phosphorylation by tyrosine kinases, in response to ligation of a variety of growth factor receptors and immune system receptors. For instance, SYK phosphorylates and activates PLCG1 in response to ligation of the B-cell receptor. May be dephosphorylated by PTPRJ. Phosphorylated by ITK and TXK on Tyr-783 upon TCR activation in T-cells.

Its subcellular location is the cell projection. The protein resides in the lamellipodium. It is found in the ruffle. The catalysed reaction is a 1,2-diacyl-sn-glycero-3-phospho-(1D-myo-inositol-4,5-bisphosphate) + H2O = 1D-myo-inositol 1,4,5-trisphosphate + a 1,2-diacyl-sn-glycerol + H(+). The enzyme catalyses a 1,2-diacyl-sn-glycero-3-phospho-(1D-myo-inositol) + H2O = 1D-myo-inositol 1-phosphate + a 1,2-diacyl-sn-glycerol + H(+). Its activity is regulated as follows. Activated by phosphorylation on tyrosine residues. In terms of biological role, mediates the production of the second messenger molecules diacylglycerol (DAG) and inositol 1,4,5-trisphosphate (IP3). Plays an important role in the regulation of intracellular signaling cascades. Becomes activated in response to ligand-mediated activation of receptor-type tyrosine kinases, such as PDGFRA, PDGFRB, EGFR, FGFR1, FGFR2, FGFR3 and FGFR4. Plays a role in actin reorganization and cell migration. Guanine nucleotide exchange factor that binds the GTPase DNM1 and catalyzes the dissociation of GDP, allowing a GTP molecule to bind in its place, therefore enhancing DNM1-dependent endocytosis. This is 1-phosphatidylinositol 4,5-bisphosphate phosphodiesterase gamma-1 from Rattus norvegicus (Rat).